The primary structure comprises 901 residues: HTH-type transcriptional regulator MalT (901 aa).

39–46 (SPAGYGKT) lines the ATP pocket. In terms of domain architecture, HTH luxR-type spans 829 to 894 (ELIRTSPLTQ…AAVQHAQKLL (66 aa)). Positions 853-872 (NEQIAGELEVAATTIKTHIR) form a DNA-binding region, H-T-H motif.

Belongs to the MalT family. In terms of assembly, monomer in solution. Oligomerizes to an active state in the presence of the positive effectors ATP and maltotriose.

Its activity is regulated as follows. Activated by ATP and maltotriose, which are both required for DNA binding. Positively regulates the transcription of the maltose regulon whose gene products are responsible for uptake and catabolism of malto-oligosaccharides. Specifically binds to the promoter region of its target genes, recognizing a short DNA motif called the MalT box. The protein is HTH-type transcriptional regulator MalT of Escherichia coli O139:H28 (strain E24377A / ETEC).